Consider the following 118-residue polypeptide: Putative pterin-4-alpha-carbinolamine dehydratase (118 aa).

This sequence belongs to the pterin-4-alpha-carbinolamine dehydratase family.

The catalysed reaction is (4aS,6R)-4a-hydroxy-L-erythro-5,6,7,8-tetrahydrobiopterin = (6R)-L-erythro-6,7-dihydrobiopterin + H2O. The polypeptide is Putative pterin-4-alpha-carbinolamine dehydratase (Xanthomonas campestris pv. campestris (strain B100)).